Here is a 484-residue protein sequence, read N- to C-terminus: Probable efflux pump outer membrane protein TtgC (484 aa).

Positions 1-17 are cleaved as a signal peptide; it reads MTKSLLSLAVTAFILGG. A lipid anchor (N-palmitoyl cysteine) is attached at Cys-18. Residue Cys-18 is the site of S-diacylglycerol cysteine attachment.

This sequence belongs to the outer membrane factor (OMF) (TC 1.B.17) family.

Its subcellular location is the cell outer membrane. Its function is as follows. Probable outer membrane component of the TtgABC efflux pump with unknown specificity. This chain is Probable efflux pump outer membrane protein TtgC (ttgC), found in Pseudomonas putida (strain ATCC 47054 / DSM 6125 / CFBP 8728 / NCIMB 11950 / KT2440).